The sequence spans 830 residues: Histone acetyltransferase KAT2A (830 aa).

The segment at 1-94 (MAEPSQAPNP…RKAQVRGLPR (94 aa)) is disordered. Position 2 is an N-acetylalanine (Ala2). Composition is skewed to pro residues over residues 7–33 (APNP…PAPS) and 41–51 (APTPAPAPAPA). Over residues 58 to 69 (TGSGGAGVGSGG) the composition is skewed to gly residues. Residues 83-94 (SQRKAQVRGLPR) are compositionally biased toward basic residues. At Ser302 the chain carries Phosphoserine. Over residues 398-417 (SFSPSMGGGSNSSLSLDSAG) the composition is skewed to low complexity. Residues 398-426 (SFSPSMGGGSNSSLSLDSAGTEPMPAGEK) form a disordered region. Positions 496–649 (VIGNSLTPKA…GATLMECELN (154 aa)) constitute an N-acetyltransferase domain. At Lys542 the chain carries N6-acetyllysine. Glu568 functions as the Proton donor/acceptor in the catalytic mechanism. Acetyl-CoA-binding positions include 572 to 574 (CAV), 579 to 585 (QVKGYGT), and Tyr610. Residues 572 to 574 (CAV), 579 to 585 (QVKGYGT), and Tyr610 contribute to the succinyl-CoA site. Residue Lys721 forms a Glycyl lysine isopeptide (Lys-Gly) (interchain with G-Cter in SUMO2) linkage. The Bromo domain occupies 721 to 825 (KDPDQLYTTL…KFFYFKLKEG (105 aa)). Thr728 is subject to Phosphothreonine. Residues Lys752 and Lys784 each participate in a glycyl lysine isopeptide (Lys-Gly) (interchain with G-Cter in SUMO2) cross-link.

The protein belongs to the acetyltransferase family. GCN5 subfamily. As to quaternary structure, interacts with EP300, CREBBP and ADA2. Component of the TFTC-HAT complex, at least composed of TAF5L, TAF6L, TAF3, TADA3L, SUPT3H/SPT3, TAF2/TAFII150, TAF4/TAFII135, TAF5/TAFII100, KAT2A/GCN5L2, TAF10 and TRRAP. Component of the STAGA transcription coactivator-HAT complex, at least composed of SUPT3H, KAT2A, SUPT7L, TAF5L, TAF6L, TADA3L, TAD1L, TAF10, TAF12, TRRAP and TAF9. The STAGA core complex is associated with a subcomplex required for histone deubiquitination composed of ATXN7L3, ENY2 and USP22. Component of the ADA2A-containing complex (ATAC), composed of KAT14, KAT2A, TADA2L, TADA3L, ZZ3, MBIP, WDR5, YEATS2, CCDC101 and DR1. In the complex, it probably interacts directly with KAT14, MBIP and WDR5. Interacts with PML. Interacts with CEBPB. Interacts with TACC1, TACC2 and TACC3. Interacts with RELA. Interacts with NFATC2. Interacts with TBX5. Interacts with PLK4. Associates with the 2-oxoglutarate dehydrogenase complex. Interacts with XPC; leading to KAT2A recruitment to promoters and subsequent acetylation of histones. Interacts with ERCC3/XPB; leading to KAT2A recruitment to promoters and subsequent acetylation of histones. Interacts with ISL1. Interactions of ISL1 with MLIP1 or KAT2A may be mutually exclusive. Acetylated at Lys-542, inhibiting the protein acetyltransferase activity. Deacetylation at Lys-542 by SIRT6 promotes phosphorylation at Ser-302 and Thr-728 and subsequent activation of the protein acetyltransferase activity, leading to acetylation and inactivation of PPARGC1A. In terms of tissue distribution, in brain, highly expressed in the hippocampal CA1 region (at protein level). Also expressed in the hippocampal subregions CA3 and the dentate gyrus as well as in the cortex and prefrontal cortex. Expressed at low level in the cerebellum.

The protein resides in the nucleus. It is found in the chromosome. Its subcellular location is the cytoplasm. The protein localises to the cytoskeleton. It localises to the microtubule organizing center. The protein resides in the centrosome. The catalysed reaction is L-lysyl-[histone] + acetyl-CoA = N(6)-acetyl-L-lysyl-[histone] + CoA + H(+). It catalyses the reaction L-lysyl-[protein] + acetyl-CoA = N(6)-acetyl-L-lysyl-[protein] + CoA + H(+). It carries out the reaction succinyl-CoA + L-lysyl-[protein] = N(6)-succinyl-L-lysyl-[protein] + CoA + H(+). The enzyme catalyses glutaryl-CoA + L-lysyl-[protein] = N(6)-glutaryl-L-lysyl-[protein] + CoA + H(+). In terms of biological role, protein lysine acyltransferase that can act as a acetyltransferase, glutaryltransferase, succinyltransferase or malonyltransferase, depending on the context. Acts as a histone lysine succinyltransferase: catalyzes succinylation of histone H3 on 'Lys-79' (H3K79succ), with a maximum frequency around the transcription start sites of genes. Succinylation of histones gives a specific tag for epigenetic transcription activation. Association with the 2-oxoglutarate dehydrogenase complex, which provides succinyl-CoA, is required for histone succinylation. In different complexes, functions either as an acetyltransferase (HAT) or as a succinyltransferase: in the SAGA and ATAC complexes, acts as a histone acetyltransferase. Has significant histone acetyltransferase activity with core histones, but not with nucleosome core particles. Has a a strong preference for acetylation of H3 at 'Lys-9' (H3K9ac). Acetylation of histones gives a specific tag for epigenetic transcription activation. Recruited by the XPC complex at promoters, where it specifically mediates acetylation of histone variant H2A.Z.1/H2A.Z, thereby promoting expression of target genes. Involved in long-term memory consolidation and synaptic plasticity: acts by promoting expression of a hippocampal gene expression network linked to neuroactive receptor signaling. Acts as a positive regulator of T-cell activation: upon TCR stimulation, recruited to the IL2 promoter following interaction with NFATC2 and catalyzes acetylation of histone H3 at 'Lys-9' (H3K9ac), leading to promote IL2 expression. Required for growth and differentiation of craniofacial cartilage and bone by regulating acetylation of histone H3 at 'Lys-9' (H3K9ac). Regulates embryonic stem cell (ESC) pluripotency and differentiation. Also acetylates non-histone proteins, such as CEBPB, MRE11, PPARGC1A, PLK4 and TBX5. Involved in heart and limb development by mediating acetylation of TBX5, acetylation regulating nucleocytoplasmic shuttling of TBX5. Acts as a negative regulator of centrosome amplification by mediating acetylation of PLK4. Acts as a negative regulator of gluconeogenesis by mediating acetylation and subsequent inactivation of PPARGC1A. Also acts as a histone glutaryltransferase: catalyzes glutarylation of histone H4 on 'Lys-91' (H4K91glu), a mark that destabilizes nucleosomes by promoting dissociation of the H2A-H2B dimers from nucleosomes. The polypeptide is Histone acetyltransferase KAT2A (Mus musculus (Mouse)).